The primary structure comprises 243 residues: Cyclin-dependent kinase 20 (243 aa).

Positions 4–243 (YCILGRIGEG…IHLSCRFLSV (240 aa)) constitute a Protein kinase domain. ATP is bound by residues 10–18 (IGEGAHGIV) and Lys33. The Proton acceptor role is filled by Asp127.

Belongs to the protein kinase superfamily. CMGC Ser/Thr protein kinase family. CDC2/CDKX subfamily. As to quaternary structure, monomer. Interacts with TBC1D32 and MAK.

It localises to the nucleus. The protein resides in the cytoplasm. The protein localises to the cell projection. Its subcellular location is the cilium. It catalyses the reaction L-seryl-[protein] + ATP = O-phospho-L-seryl-[protein] + ADP + H(+). The catalysed reaction is L-threonyl-[protein] + ATP = O-phospho-L-threonyl-[protein] + ADP + H(+). Required for high-level Shh responses in the developing neural tube. Together with TBC1D32, controls the structure of the primary cilium by coordinating assembly of the ciliary membrane and axoneme, allowing GLI2 to be properly activated in response to SHH signaling. Involved in cell growth. Activates CDK2, a kinase involved in the control of the cell cycle, by phosphorylating residue 'Thr-160'. This Macaca mulatta (Rhesus macaque) protein is Cyclin-dependent kinase 20 (CDK20).